The primary structure comprises 96 residues: Large ribosomal subunit protein uL23 (96 aa).

Belongs to the universal ribosomal protein uL23 family. In terms of assembly, part of the 50S ribosomal subunit. Contacts protein L29, and trigger factor when it is bound to the ribosome.

In terms of biological role, one of the early assembly proteins it binds 23S rRNA. One of the proteins that surrounds the polypeptide exit tunnel on the outside of the ribosome. Forms the main docking site for trigger factor binding to the ribosome. The polypeptide is Large ribosomal subunit protein uL23 (Brevibacillus brevis (strain 47 / JCM 6285 / NBRC 100599)).